The primary structure comprises 428 residues: Dihydroorotase (428 aa).

Residues His-56 and His-58 each contribute to the Zn(2+) site. Substrate-binding positions include 58–60 (HLR) and Asn-90. Zn(2+) contacts are provided by Asp-150, His-177, and His-230. Residue Asn-276 coordinates substrate. Asp-303 is a Zn(2+) binding site. Residue Asp-303 is part of the active site. His-307 lines the substrate pocket.

Belongs to the metallo-dependent hydrolases superfamily. DHOase family. Class I DHOase subfamily. Requires Zn(2+) as cofactor.

The enzyme catalyses (S)-dihydroorotate + H2O = N-carbamoyl-L-aspartate + H(+). Its pathway is pyrimidine metabolism; UMP biosynthesis via de novo pathway; (S)-dihydroorotate from bicarbonate: step 3/3. Functionally, catalyzes the reversible cyclization of carbamoyl aspartate to dihydroorotate. The polypeptide is Dihydroorotase (Streptomyces coelicolor (strain ATCC BAA-471 / A3(2) / M145)).